The following is a 719-amino-acid chain: Polyribonucleotide nucleotidyltransferase (719 aa).

Mg(2+) contacts are provided by Asp507 and Asp513. A KH domain is found at 573-633; the sequence is PKLELFSVDP…EQIKAAKDYI (61 aa). The 62-residue stretch at 658–719 folds into the S1 motif domain; the sequence is GQEFQGIVKK…NGKISVDLCE (62 aa).

This sequence belongs to the polyribonucleotide nucleotidyltransferase family. It depends on Mg(2+) as a cofactor.

The protein resides in the cytoplasm. The catalysed reaction is RNA(n+1) + phosphate = RNA(n) + a ribonucleoside 5'-diphosphate. Functionally, involved in mRNA degradation. Catalyzes the phosphorolysis of single-stranded polyribonucleotides processively in the 3'- to 5'-direction. The chain is Polyribonucleotide nucleotidyltransferase from Campylobacter jejuni subsp. jejuni serotype O:23/36 (strain 81-176).